Consider the following 162-residue polypeptide: CASP-like protein 1C1 (162 aa).

Topologically, residues 1-7 are cytoplasmic; the sequence is MAKLHRL. A helical transmembrane segment spans residues 8–28; it reads ISAVLRLAAAGAAAAAAIIMV. Residues 29-50 lie on the Extracellular side of the membrane; sequence TSHETTSFFGIEMEAKYSYTPS. A helical membrane pass occupies residues 51–71; the sequence is FVFFVVAFAVAFAYSLLALLA. Topologically, residues 72-79 are cytoplasmic; sequence RPGSTASR. A helical transmembrane segment spans residues 80–100; it reads LLLLSDVMVGMLLTGAVAATG. At 101–128 the chain is on the extracellular side; it reads AISQVGKSGNEHAGWLPICAQVQAYCSH. A helical membrane pass occupies residues 129 to 149; it reads VMGALIAGFVSLLLYFLIIMY. Over 150 to 162 the chain is Cytoplasmic; it reads SLHAVAEPLCSCH.

The protein belongs to the Casparian strip membrane proteins (CASP) family. Homodimer and heterodimers.

It localises to the cell membrane. This is CASP-like protein 1C1 from Sorghum bicolor (Sorghum).